The chain runs to 141 residues: Hemoglobin subunit alpha-D (141 aa).

One can recognise a Globin domain in the interval 1–141 (VLTGEDKKHV…VAAVLAEKYR (141 aa)). Residues His-58 and His-87 each coordinate heme b.

This sequence belongs to the globin family. Heterotetramer of two alpha-D chains and two beta chains. In terms of tissue distribution, red blood cells.

Its function is as follows. Involved in oxygen transport from the lung to the various peripheral tissues. This Turdus merula (Common blackbird) protein is Hemoglobin subunit alpha-D (HBAD).